The chain runs to 274 residues: HTH-type transcriptional regulator GadX (274 aa).

Positions threonine 145–arginine 242 constitute an HTH araC/xylS-type domain. 2 consecutive DNA-binding regions (H-T-H motif) follow at residues alanine 162–glycine 183 and isoleucine 209–tyrosine 232.

Homodimer.

In terms of biological role, positively regulates the expression of about fifteen genes involved in acid resistance such as gadA, gadB and gadC. Depending on the conditions (growth phase and medium), can repress gadW. This Escherichia coli O6:H1 (strain CFT073 / ATCC 700928 / UPEC) protein is HTH-type transcriptional regulator GadX (gadX).